Consider the following 286-residue polypeptide: S-methyl-5'-thioadenosine phosphorylase (286 aa).

Phosphate-binding positions include Ser11, 53-54 (RH), and 86-87 (SA). Substrate is bound at residue Met185. Thr186 lines the phosphate pocket. 209-211 (DYD) serves as a coordination point for substrate.

This sequence belongs to the PNP/MTAP phosphorylase family. MTAP subfamily. In terms of assembly, homohexamer. Dimer of a homotrimer.

It catalyses the reaction S-methyl-5'-thioadenosine + phosphate = 5-(methylsulfanyl)-alpha-D-ribose 1-phosphate + adenine. It functions in the pathway amino-acid biosynthesis; L-methionine biosynthesis via salvage pathway; S-methyl-5-thio-alpha-D-ribose 1-phosphate from S-methyl-5'-thioadenosine (phosphorylase route): step 1/1. Its function is as follows. Catalyzes the reversible phosphorylation of S-methyl-5'-thioadenosine (MTA) to adenine and 5-methylthioribose-1-phosphate. Involved in the breakdown of MTA, a major by-product of polyamine biosynthesis. Responsible for the first step in the methionine salvage pathway after MTA has been generated from S-adenosylmethionine. Has broad substrate specificity with 6-aminopurine nucleosides as preferred substrates. The polypeptide is S-methyl-5'-thioadenosine phosphorylase (Geobacter sulfurreducens (strain ATCC 51573 / DSM 12127 / PCA)).